The sequence spans 144 residues: Large ribosomal subunit protein uL16 (144 aa).

The protein belongs to the universal ribosomal protein uL16 family. In terms of assembly, part of the 50S ribosomal subunit.

In terms of biological role, binds 23S rRNA and is also seen to make contacts with the A and possibly P site tRNAs. The polypeptide is Large ribosomal subunit protein uL16 (Caldanaerobacter subterraneus subsp. tengcongensis (strain DSM 15242 / JCM 11007 / NBRC 100824 / MB4) (Thermoanaerobacter tengcongensis)).